A 103-amino-acid polypeptide reads, in one-letter code: Large ribosomal subunit protein uL24 (103 aa).

This sequence belongs to the universal ribosomal protein uL24 family. As to quaternary structure, part of the 50S ribosomal subunit.

One of two assembly initiator proteins, it binds directly to the 5'-end of the 23S rRNA, where it nucleates assembly of the 50S subunit. Its function is as follows. One of the proteins that surrounds the polypeptide exit tunnel on the outside of the subunit. The polypeptide is Large ribosomal subunit protein uL24 (Bacillus anthracis (strain A0248)).